The sequence spans 126 residues: Holo-[acyl-carrier-protein] synthase (126 aa).

Residues D9 and E58 each coordinate Mg(2+).

The protein belongs to the P-Pant transferase superfamily. AcpS family. The cofactor is Mg(2+).

The protein resides in the cytoplasm. It carries out the reaction apo-[ACP] + CoA = holo-[ACP] + adenosine 3',5'-bisphosphate + H(+). In terms of biological role, transfers the 4'-phosphopantetheine moiety from coenzyme A to a Ser of acyl-carrier-protein. In Erwinia tasmaniensis (strain DSM 17950 / CFBP 7177 / CIP 109463 / NCPPB 4357 / Et1/99), this protein is Holo-[acyl-carrier-protein] synthase.